The sequence spans 446 residues: Putative hydrolase YbfO (446 aa).

An N-terminal signal peptide occupies residues 1-28 (MKRMIVRMTLPLLIVCLAFSSFSASARA).

This Bacillus subtilis (strain 168) protein is Putative hydrolase YbfO (ybfO).